A 206-amino-acid polypeptide reads, in one-letter code: Outer-membrane lipoprotein LolB (206 aa).

An N-terminal signal peptide occupies residues 1-21 (MHERNYAVFRLLPLASLLLAA). A lipid anchor (N-palmitoyl cysteine) is attached at Cys22. Cys22 is lipidated: S-diacylglycerol cysteine.

Belongs to the LolB family. Monomer.

It localises to the cell outer membrane. Its function is as follows. Plays a critical role in the incorporation of lipoproteins in the outer membrane after they are released by the LolA protein. In Sodalis glossinidius (strain morsitans), this protein is Outer-membrane lipoprotein LolB.